We begin with the raw amino-acid sequence, 702 residues long: Transposon Tn7 transposition protein TnsB (702 aa).

The segment at 1–139 (MWQINEVVLF…GQTPNALIPD (139 aa)) is DNA-binding domain 1 (DBD1). The segment at residues 105–124 (VEHVVQEHKVTKATVYKLLR) is a DNA-binding region (H-T-H motif). Positions 137–160 (IPDYKNSGAPGERRSATGTAKIGR) are disordered. Residues 140 to 172 (YKNSGAPGERRSATGTAKIGRAREYGKGEGTKV) are linker 1. Residues 173 to 233 (TPEIERLFRL…QFRYFYDREY (61 aa)) form a DNA-binding domain 2 (DBD2) region. Positions 234 to 267 (PKAQRLKSRVKAGVYKKDVRPLSSTATSQALGPG) are linker 2. The Integrase catalytic domain maps to 262–480 (QALGPGSRYE…IPVQLWQWGM (219 aa)). A catalytic domain (CD) region spans residues 268–582 (SRYEIDATIA…RSRQFKGLSF (315 aa)). The tract at residues 589 to 702 (QAQEKHNKAN…FQDPPEKDES (114 aa)) is C-terminal domain. The interval 623–702 (KLTPSTTEPK…FQDPPEKDES (80 aa)) is disordered.

As to quaternary structure, heteromer with TnsA.

Its function is as follows. Sequence-specific, DNA-binding protein required for Tn7 transposition. Recognizes sequences necessary for recombination at both left and right ends of Tn7 and, together with TnsA, forms the transposase. TnsB executes the 3'-DNA strand breakage and joining reactions. TnsB binding introduces DNA bending. There are 3 DNA-binding sites in the left and 4 in the right end of Tn7; as TnsB levels increase more TnsB is bound, suggesting high protein levels contribute to transposon immunity. Binding of TnsB to the transposon right end represses expression of the downstream transposition genes. TnsABC + TnsD promote high-frequency insertion of Tn7 into a specific target site known as att-Tn7 whereas TnsABC + TnsE promote low-frequency insertion into many different sites. This is Transposon Tn7 transposition protein TnsB from Escherichia coli.